A 119-amino-acid polypeptide reads, in one-letter code: Amicyanin-alpha (119 aa).

The N-terminal stretch at 1-20 (MRALAFAAALAAFSATAALA) is a signal peptide. One can recognise a Plastocyanin-like domain in the interval 21–119 (AGALEAVQEA…PFMKGKVVVE (99 aa)). Cu cation-binding residues include histidine 67, cysteine 106, histidine 109, and methionine 112.

Cu cation serves as cofactor.

Its subcellular location is the periplasm. It participates in one-carbon metabolism; methylamine degradation. Its function is as follows. Primary acceptor of electrons from methylamine dehydrogenase. Passes those electrons on either a soluble cytochrome c or to pseudoazurin. In Methylorubrum extorquens (strain ATCC 14718 / DSM 1338 / JCM 2805 / NCIMB 9133 / AM1) (Methylobacterium extorquens), this protein is Amicyanin-alpha (mauC).